Consider the following 226-residue polypeptide: 6-carboxyhexanoate--CoA ligase (226 aa).

This sequence belongs to the BioW family. As to quaternary structure, homodimer. Mg(2+) serves as cofactor.

The enzyme catalyses heptanedioate + ATP + CoA = 6-carboxyhexanoyl-CoA + AMP + diphosphate. The protein operates within metabolic intermediate metabolism; pimeloyl-CoA biosynthesis; pimeloyl-CoA from pimelate: step 1/1. Its function is as follows. Catalyzes the transformation of pimelate into pimeloyl-CoA with concomitant hydrolysis of ATP to AMP. This chain is 6-carboxyhexanoate--CoA ligase, found in Methanocaldococcus infernus (strain DSM 11812 / JCM 15783 / ME).